Reading from the N-terminus, the 488-residue chain is Splicing factor U2AF 65 kDa subunit (488 aa).

Composition is skewed to basic and acidic residues over residues 25-55 (LESL…DEDR) and 78-129 (DRRD…KYRF). The interval 25–133 (LESLQEDVKP…PKKYRFWDVP (109 aa)) is disordered. 3 RRM domains span residues 175–257 (RRLY…RPRD), 282–359 (NKIF…LACA), and 389–479 (EILC…YYDV).

Belongs to the splicing factor SR family. As to quaternary structure, forms a heterodimer with the U2AF small subunit.

Its subcellular location is the nucleus. In terms of biological role, necessary for the splicing of pre-mRNA. Binds to the polypyrimidine tract of introns early during spliceosome assembly. This is Splicing factor U2AF 65 kDa subunit (uaf-1) from Caenorhabditis briggsae.